Here is a 185-residue protein sequence, read N- to C-terminus: Transcription termination/antitermination protein NusG (185 aa).

The region spanning 133-161 (PGEEVRVTEGPFADFNGTVEEVDYEKGRL) is the KOW domain.

Belongs to the NusG family.

In terms of biological role, participates in transcription elongation, termination and antitermination. This is Transcription termination/antitermination protein NusG from Haemophilus influenzae (strain ATCC 51907 / DSM 11121 / KW20 / Rd).